We begin with the raw amino-acid sequence, 604 residues long: Aspartate--tRNA(Asp/Asn) ligase (604 aa).

Glutamate 175 provides a ligand contact to L-aspartate. Residues glutamine 199–lysine 202 form an aspartate region. Residues arginine 221 and histidine 456 each contribute to the L-aspartate site. Residue arginine 221–glutamate 223 participates in ATP binding. Glutamate 496 serves as a coordination point for ATP. Residue arginine 503 participates in L-aspartate binding. Glycine 548–arginine 551 lines the ATP pocket.

This sequence belongs to the class-II aminoacyl-tRNA synthetase family. Type 1 subfamily. Homodimer.

It localises to the cytoplasm. It carries out the reaction tRNA(Asx) + L-aspartate + ATP = L-aspartyl-tRNA(Asx) + AMP + diphosphate. Its function is as follows. Aspartyl-tRNA synthetase with relaxed tRNA specificity since it is able to aspartylate not only its cognate tRNA(Asp) but also tRNA(Asn). Reaction proceeds in two steps: L-aspartate is first activated by ATP to form Asp-AMP and then transferred to the acceptor end of tRNA(Asp/Asn). The polypeptide is Aspartate--tRNA(Asp/Asn) ligase (Methylorubrum populi (strain ATCC BAA-705 / NCIMB 13946 / BJ001) (Methylobacterium populi)).